The chain runs to 54 residues: Protein hunchback (54 aa).

C2H2-type zinc fingers lie at residues arginine 1–histidine 3, phenylalanine 9–histidine 31, and tyrosine 37–leucine 54.

Belongs to the hunchback C2H2-type zinc-finger protein family.

The protein resides in the nucleus. Gap class segmentation protein that controls development of head structures. This is Protein hunchback (hb) from Calliphora vicina (Blue blowfly).